Reading from the N-terminus, the 107-residue chain is Thiosulfate sulfurtransferase GlpE (107 aa).

The Rhodanese domain occupies 16–104 (KKRDIVIADV…WKAHHPTSDA (89 aa)). Residue cysteine 64 is the Cysteine persulfide intermediate of the active site.

It belongs to the GlpE family.

Its subcellular location is the cytoplasm. It carries out the reaction thiosulfate + hydrogen cyanide = thiocyanate + sulfite + 2 H(+). The enzyme catalyses thiosulfate + [thioredoxin]-dithiol = [thioredoxin]-disulfide + hydrogen sulfide + sulfite + 2 H(+). In terms of biological role, transferase that catalyzes the transfer of sulfur from thiosulfate to thiophilic acceptors such as cyanide or dithiols. May function in a CysM-independent thiosulfate assimilation pathway by catalyzing the conversion of thiosulfate to sulfite, which can then be used for L-cysteine biosynthesis. This Coxiella burnetii (strain CbuK_Q154) (Coxiella burnetii (strain Q154)) protein is Thiosulfate sulfurtransferase GlpE.